Reading from the N-terminus, the 284-residue chain is ATP synthase gamma chain (284 aa).

This sequence belongs to the ATPase gamma chain family. F-type ATPases have 2 components, CF(1) - the catalytic core - and CF(0) - the membrane proton channel. CF(1) has five subunits: alpha(3), beta(3), gamma(1), delta(1), epsilon(1). CF(0) has three main subunits: a, b and c.

The protein resides in the cell membrane. In terms of biological role, produces ATP from ADP in the presence of a proton gradient across the membrane. The gamma chain is believed to be important in regulating ATPase activity and the flow of protons through the CF(0) complex. This Bacillus licheniformis (strain ATCC 14580 / DSM 13 / JCM 2505 / CCUG 7422 / NBRC 12200 / NCIMB 9375 / NCTC 10341 / NRRL NRS-1264 / Gibson 46) protein is ATP synthase gamma chain.